The following is a 414-amino-acid chain: WW domain-containing oxidoreductase (414 aa).

Residues 1–23 (MAALRYAGLDDTDSEDELPPGWE) are disordered. Position 12 is a phosphothreonine (threonine 12). Serine 14 carries the phosphoserine modification. The region spanning 16 to 49 (DELPPGWEERTTKDGWVYYANHTEEKTQWEHPKT) is the WW 1 domain. Tyrosine 33 is subject to Phosphotyrosine. The short motif at 50 to 55 (GKRKRV) is the Nuclear localization signal element. In terms of domain architecture, WW 2 spans 57–90 (GDLPYGWEQETDENGQVFFVDHINKRTTYLDPRL). Residues 125–414 (KVVVVTGANS…IQERLGSQSG (290 aa)) form an interaction with MAPT region. 131–137 (GANSGIG) is a binding site for NADP(+). The tract at residues 209-273 (CNAATFALPW…RFTDINDSLG (65 aa)) is mediates targeting to the mitochondria. A substrate-binding site is contributed by serine 260. Phosphotyrosine; by TNK2 is present on tyrosine 287. Catalysis depends on tyrosine 293, which acts as the Proton acceptor.

The protein belongs to the short-chain dehydrogenases/reductases (SDR) family. Interacts with TP53, p73/TP73 and MAPK8. Interacts with MAPT/TAU, RUNX2 and HYAL2. Forms a ternary complex with TP53 and MDM2. Interacts with ERBB4, LITAF and WBP1. Interacts with DVL1, DVL2 and DVL3. May interact with FAM189B and SCOTIN. Interacts with TNK2. Interacts with TMEM207. Interacts (via WW domain) with VOPP1. Phosphorylated upon genotoxic stress. Phosphorylation of Tyr-33 regulates interaction with TP53, TP73 and MAPK8. May also regulate proapoptotic activity. Phosphorylation by TNK2 is associated with polyubiquitination and degradation. In terms of processing, ubiquitinated when phosphorylated by TNK2, leading to its degradation. Widely expressed. Strongly expressed in testis, prostate, and ovary. Overexpressed in cancer cell lines. Isoform 5 and isoform 6 may only be expressed in tumor cell lines.

The protein localises to the cytoplasm. Its subcellular location is the nucleus. It localises to the mitochondrion. It is found in the golgi apparatus. The protein resides in the lysosome. Its function is as follows. Putative oxidoreductase. Acts as a tumor suppressor and plays a role in apoptosis. Required for normal bone development. May function synergistically with p53/TP53 to control genotoxic stress-induced cell death. Plays a role in TGFB1 signaling and TGFB1-mediated cell death. May also play a role in tumor necrosis factor (TNF)-mediated cell death. Inhibits Wnt signaling, probably by sequestering DVL2 in the cytoplasm. The polypeptide is WW domain-containing oxidoreductase (WWOX) (Homo sapiens (Human)).